The sequence spans 322 residues: tRNA U34 carboxymethyltransferase (322 aa).

Residues K92, W106, K111, G131, 153-155 (DPS), 181-182 (VE), M196, Y200, and R315 contribute to the carboxy-S-adenosyl-L-methionine site.

The protein belongs to the class I-like SAM-binding methyltransferase superfamily. CmoB family. As to quaternary structure, homotetramer.

It carries out the reaction carboxy-S-adenosyl-L-methionine + 5-hydroxyuridine(34) in tRNA = 5-carboxymethoxyuridine(34) in tRNA + S-adenosyl-L-homocysteine + H(+). Functionally, catalyzes carboxymethyl transfer from carboxy-S-adenosyl-L-methionine (Cx-SAM) to 5-hydroxyuridine (ho5U) to form 5-carboxymethoxyuridine (cmo5U) at position 34 in tRNAs. The protein is tRNA U34 carboxymethyltransferase of Pseudoalteromonas translucida (strain TAC 125).